A 194-amino-acid polypeptide reads, in one-letter code: Aminodeoxychorismate/anthranilate synthase component 2 (194 aa).

One can recognise a Glutamine amidotransferase type-1 domain in the interval 1 to 194 (MILMIDNYDS…IETYRKEVIA (194 aa)). Active-site residues include cysteine 79, histidine 168, and glutamate 170.

Monomer. Heterodimer consisting of two non-identical subunits: a glutamine amidotransferase subunit (PabA) and a aminodeoxychorismate synthase subunit (PabB).

It carries out the reaction chorismate + L-glutamine = anthranilate + pyruvate + L-glutamate + H(+). The catalysed reaction is chorismate + L-glutamine = 4-amino-4-deoxychorismate + L-glutamate. The protein operates within amino-acid biosynthesis; L-tryptophan biosynthesis; L-tryptophan from chorismate: step 1/5. It participates in cofactor biosynthesis; tetrahydrofolate biosynthesis; 4-aminobenzoate from chorismate: step 1/2. Its function is as follows. Part of a heterodimeric complex that catalyzes the two-step biosynthesis of 4-amino-4-deoxychorismate (ADC), a precursor of p-aminobenzoate (PABA) and tetrahydrofolate. In the first step, a glutamine amidotransferase (PabA) generates ammonia as a substrate that, along with chorismate, is used in the second step, catalyzed by aminodeoxychorismate synthase (PabB) to produce ADC. PabA converts glutamine into glutamate only in the presence of stoichiometric amounts of PabB. Also involved in the biosynthesis of anthranilate. Complements a glutamine amidotransferase-negative mutant. This is Aminodeoxychorismate/anthranilate synthase component 2 from Bacillus subtilis (strain 168).